The following is a 541-amino-acid chain: Probable malate:quinone oxidoreductase (541 aa).

A disordered region spans residues 520–541 (AKPAAGAAQQAKPAKATADIAL).

Belongs to the MQO family. FAD is required as a cofactor.

The enzyme catalyses (S)-malate + a quinone = a quinol + oxaloacetate. It functions in the pathway carbohydrate metabolism; tricarboxylic acid cycle; oxaloacetate from (S)-malate (quinone route): step 1/1. This chain is Probable malate:quinone oxidoreductase, found in Ralstonia nicotianae (strain ATCC BAA-1114 / GMI1000) (Ralstonia solanacearum).